Reading from the N-terminus, the 325-residue chain is Glyoxylate/hydroxypyruvate reductase B (325 aa).

Active-site residues include Arg237 and Glu266. Catalysis depends on His285, which acts as the Proton donor.

The protein belongs to the D-isomer specific 2-hydroxyacid dehydrogenase family. GhrB subfamily. As to quaternary structure, homodimer.

It localises to the cytoplasm. It catalyses the reaction glycolate + NADP(+) = glyoxylate + NADPH + H(+). It carries out the reaction (R)-glycerate + NAD(+) = 3-hydroxypyruvate + NADH + H(+). The enzyme catalyses (R)-glycerate + NADP(+) = 3-hydroxypyruvate + NADPH + H(+). Catalyzes the NADPH-dependent reduction of glyoxylate and hydroxypyruvate into glycolate and glycerate, respectively. In Serratia proteamaculans (strain 568), this protein is Glyoxylate/hydroxypyruvate reductase B.